Reading from the N-terminus, the 133-residue chain is Profilin-3 (133 aa).

Cys-13 and Cys-117 are oxidised to a cystine. An Involved in PIP2 interaction motif is present at residues 83 to 99; sequence AVIRGKKGSGGITIKKT. Phosphothreonine is present on Thr-113.

This sequence belongs to the profilin family. Occurs in many kinds of cells as a complex with monomeric actin in a 1:1 ratio. Phosphorylated by MAP kinases.

Its subcellular location is the cytoplasm. It is found in the cytoskeleton. Binds to actin and affects the structure of the cytoskeleton. At high concentrations, profilin prevents the polymerization of actin, whereas it enhances it at low concentrations. This Corylus avellana (European hazel) protein is Profilin-3.